We begin with the raw amino-acid sequence, 319 residues long: Cutinase cut1 (319 aa).

Residues 1-58 (MPPHAARPGPAQNRRGRAMAVITPRRERSSLLSRALRFTAAAATALVTAVSLAAPAHA) form the signal peptide. Tyr-118 contributes to the poly(ethylene terephthalate) binding site. Ser-188 acts as the Nucleophile in catalysis. Met-189 and Trp-213 together coordinate poly(ethylene terephthalate). Catalysis depends on charge relay system residues Asp-234 and His-266. An intrachain disulfide couples Cys-299 to Cys-317.

The protein belongs to the AB hydrolase superfamily.

The protein resides in the secreted. The protein localises to the periplasm. The catalysed reaction is an acetyl ester + H2O = an aliphatic alcohol + acetate + H(+). It carries out the reaction a butanoate ester + H2O = an aliphatic alcohol + butanoate + H(+). It catalyses the reaction pentanoate ester + H2O = pentanoate + an aliphatic alcohol + H(+). The enzyme catalyses an octanoate ester + H2O = an aliphatic alcohol + octanoate + H(+). The catalysed reaction is decanoate ester + H2O = decanoate + an aliphatic alcohol + H(+). It carries out the reaction a dodecanoate ester + H2O = an aliphatic alcohol + dodecanoate + H(+). It catalyses the reaction a tetradecanoate ester + H2O = an aliphatic alcohol + tetradecanoate + H(+). The enzyme catalyses hexadecanoate ester + H2O = an aliphatic alcohol + hexadecanoate + H(+). The catalysed reaction is cutin + H2O = cutin monomers.. It carries out the reaction (ethylene terephthalate)(n) + H2O = (ethylene terephthalate)(n-1) + 4-[(2-hydroxyethoxy)carbonyl]benzoate + H(+). With respect to regulation, activated by magnesium ions. Activated by calcium ions. Functionally, catalyzes the hydrolysis of cutin, a polyester that forms the structure of plant cuticle. Shows esterase activity towards p-nitrophenol-linked aliphatic esters (pNP-aliphatic esters). Capable of degrading the plastic poly(ethylene terephthalate) (PET), the most abundant polyester plastic in the world. This Thermobifida fusca (Thermomonospora fusca) protein is Cutinase cut1.